The primary structure comprises 276 residues: Omega-amidase NIT2 (276 aa).

The region spanning 4 to 248 is the CN hydrolase domain; it reads FRLALIQLQI…EAIVYSDIDL (245 aa). At Ser-26 the chain carries Phosphoserine. Glu-43 (proton acceptor) is an active-site residue. An N6-acetyllysine; alternate modification is found at Lys-68. The residue at position 68 (Lys-68) is an N6-succinyllysine; alternate. Lys-112 (proton donor) is an active-site residue. An N6-succinyllysine mark is found at Lys-123 and Lys-130. The Nucleophile role is filled by Cys-153.

As to quaternary structure, homodimer. As to expression, detected in fetal brain (at protein level). Ubiquitous. Detected in heart, brain, placenta, lung, liver, skeletal muscle, kidney, pancreas, prostate, spleen, thymus, prostate, testis, ovary, small intestine and colon.

Its subcellular location is the cytoplasm. The catalysed reaction is a monoamide of a dicarboxylate + H2O = a dicarboxylate + NH4(+). The enzyme catalyses 2-oxoglutaramate + H2O = 2-oxoglutarate + NH4(+). It carries out the reaction 2-oxosuccinamate + H2O = oxaloacetate + NH4(+). Has omega-amidase activity. The role of omega-amidase is to remove potentially toxic intermediates by converting 2-oxoglutaramate and 2-oxosuccinamate to biologically useful 2-oxoglutarate and oxaloacetate, respectively. This Homo sapiens (Human) protein is Omega-amidase NIT2 (NIT2).